The sequence spans 557 residues: (-)-germacrene D synthase (557 aa).

Residues aspartate 310, aspartate 314, and glutamate 462 each contribute to the Mg(2+) site. Residues 310–314 (DDIYD) carry the DDXXD motif motif.

The protein belongs to the terpene synthase family. Tpsa subfamily. Mg(2+) serves as cofactor. Expressed in flowers. Detected in stems, young leaves and tendrils.

The protein resides in the cytoplasm. The catalysed reaction is (2E,6E)-farnesyl diphosphate + H2O = (1E,4S,5E,7R)-germacra-1(10),5-dien-11-ol + diphosphate. It carries out the reaction (2E,6E)-farnesyl diphosphate = (-)-germacrene D + diphosphate. It participates in secondary metabolite biosynthesis; terpenoid biosynthesis. Functionally, involved in the biosynthesis of germacrene D. Can use farnesyl diphosphate as substrate, but not geranyl diphosphate or geranylgeranyl diphosphate. Produces mainly (-)-germacrene D along with gamma-cadinene. The protein is (-)-germacrene D synthase of Vitis vinifera (Grape).